A 1324-amino-acid chain; its full sequence is Tetratricopeptide repeat protein 21 homolog (1324 aa).

16 TPR repeats span residues P58–A91, S414–M446, S582–E615, D669–F702, P737–D770, Q772–K804, M806–P837, I847–I880, A894–D927, K929–N961, E963–H995, H997–C1029, S1033–W1066, E1205–C1238, K1240–R1272, and P1274–Y1307.

Belongs to the TTC21 family. In terms of assembly, component of the IFT complex A (IFT-A) composed of at least che-11, daf-10, dyf-2, ift-139, ift-43 and ifta-1. Expressed in ciliated sensory neurons in the head and tail.

The protein resides in the cell projection. It is found in the cilium. Its subcellular location is the cytoplasm. It localises to the cytoskeleton. The protein localises to the cilium basal body. The protein resides in the dendrite. Its function is as follows. Component of the IFT complex A (IFT-A), a complex required for retrograde ciliary transport. In particular, may act redundantly with the intraflagellar transport protein ift-43 to regulate the transport of specific ciliary cargo proteins such as che-3 which are related to motility. Functions in cilia biogenesis. The protein is Tetratricopeptide repeat protein 21 homolog of Caenorhabditis elegans.